Here is a 124-residue protein sequence, read N- to C-terminus: Fluoride-specific ion channel FluC (124 aa).

3 helical membrane passes run 20-40 (LLSI…TLLV), 60-80 (ISPE…TTFS), and 102-122 (VLLN…LIFS). The Na(+) site is built by glycine 74 and threonine 77.

It belongs to the fluoride channel Fluc/FEX (TC 1.A.43) family.

The protein localises to the cell inner membrane. The enzyme catalyses fluoride(in) = fluoride(out). Its activity is regulated as follows. Na(+) is not transported, but it plays an essential structural role and its presence is essential for fluoride channel function. Fluoride-specific ion channel. Important for reducing fluoride concentration in the cell, thus reducing its toxicity. The polypeptide is Fluoride-specific ion channel FluC (Shewanella frigidimarina (strain NCIMB 400)).